The primary structure comprises 452 residues: Tubulin beta-2 chain (452 aa).

The GTP site is built by Q11, E72, S141, G145, T146, G147, N207, and N229. E72 is a Mg(2+) binding site. The interval 414-452 (AESNMNDPVAEYQQYQDATADDEEEYDDEAADDHHQYES) is disordered. Acidic residues predominate over residues 432-444 (TADDEEEYDDEAA).

The protein belongs to the tubulin family. In terms of assembly, dimer of alpha and beta chains. A typical microtubule is a hollow water-filled tube with an outer diameter of 25 nm and an inner diameter of 15 nM. Alpha-beta heterodimers associate head-to-tail to form protofilaments running lengthwise along the microtubule wall with the beta-tubulin subunit facing the microtubule plus end conferring a structural polarity. Microtubules usually have 13 protofilaments but different protofilament numbers can be found in some organisms and specialized cells. Mg(2+) is required as a cofactor.

It localises to the cytoplasm. Its subcellular location is the cytoskeleton. Functionally, tubulin is the major constituent of microtubules, a cylinder consisting of laterally associated linear protofilaments composed of alpha- and beta-tubulin heterodimers. Microtubules grow by the addition of GTP-tubulin dimers to the microtubule end, where a stabilizing cap forms. Below the cap, tubulin dimers are in GDP-bound state, owing to GTPase activity of alpha-tubulin. The polypeptide is Tubulin beta-2 chain (TUBB2) (Solanum tuberosum (Potato)).